Consider the following 222-residue polypeptide: MAFVKSGWLLRQSTILKRWKKNWFDLWSDGHLIYYDDQTRQNIEDKVHMPVDCINIRTGQECRDIQPPDGKSKDCMLQIVCRDGKTISLCAESTDDCLAWKFTLQDSRTNTAYVGSAVMTDETSMVSSPPPYTAYAAPAPEQAYGYGPYGGAYPPGTQVVYAANGQAYAVPYQYPYAGLYGQQPANQVIIRERYRDNDSDLALGMLAGAATGMALGSLFWVF.

The region spanning 2–109 (AFVKSGWLLR…WKFTLQDSRT (108 aa)) is the PH domain. Position 20 (Lys-20) interacts with a 1,2-diacyl-sn-glycero-3-phospho-L-serine.

The protein resides in the recycling endosome membrane. Functionally, involved in retrograde transport of recycling endosomes. The sequence is that of Pleckstrin homology domain-containing family B member 2 (PLEKHB2) from Pongo abelii (Sumatran orangutan).